The primary structure comprises 1140 residues: MVISLNSCLSFICLLLCHWIGTASPLNLEDPNVCSHWESYSVTVQESYPHPFDQIYYTSCTDILNWFKCTRHRVSYRTAYRHGEKTMYRRKSQCCPGFYESGEMCVPHCADKCVHGRCIAPNTCQCEPGWGGTNCSSACDGDHWGPHCTSRCQCKNGALCNPITGACHCAAGFRGWRCEDRCEQGTYGNDCHQRCQCQNGATCDHVTGECRCPPGYTGAFCEDLCPPGKHGPQCEQRCPCQNGGVCHHVTGECSCPSGWMGTVCGQPCPEGRFGKNCSQECQCHNGGTCDAATGQCHCSPGYTGERCQDECPVGTYGVLCAETCQCVNGGKCYHVSGACLCEAGFAGERCEARLCPEGLYGIKCDKRCPCHLENTHSCHPMSGECACKPGWSGLYCNETCSPGFYGEACQQICSCQNGADCDSVTGKCTCAPGFKGIDCSTPCPLGTYGINCSSRCGCKNDAVCSPVDGSCTCKAGWHGVDCSIRCPSGTWGFGCNLTCQCLNGGACNTLDGTCTCAPGWRGEKCELPCQDGTYGLNCAERCDCSHADGCHPTTGHCRCLPGWSGVHCDSVCAEGRWGPNCSLPCYCKNGASCSPDDGICECAPGFRGTTCQRICSPGFYGHRCSQTCPQCVHSSGPCHHITGLCDCLPGFTGALCNEVCPSGRFGKNCAGICTCTNNGTCNPIDRSCQCYPGWIGSDCSQPCPPAHWGPNCIHTCNCHNGAFCSAYDGECKCTPGWTGLYCTQRCPLGFYGKDCALICQCQNGADCDHISGQCTCRTGFMGRHCEQKCPSGTYGYGCRQICDCLNNSTCDHITGTCYCSPGWKGARCDQAGVIIVGNLNSLSRTSTALPADSYQIGAIAGIIILVLVVLFLLALFIIYRHKQKGKESSMPAVTYTPAMRVVNADYTISGTLPHSNGGNANSHYFTNPSYHTLTQCATSPHVNNRDRMTVTKSKNNQLFVNLKNVNPGKRGPVGDCTGTLPADWKHGGYLNELGAFGLDRSYMGKSLKDLGKNSEYNSSNCSLSSSENPYATIKDPPVLIPKSSECGYVEMKSPARRDSPYAEINNSTSANRNVYEVEPTVSVVQGVFSNNGRLSQDPYDLPKNSHIPCHYDLLPVRDSSSSPKQEDSGGSSSNSSSSSE.

An N-terminal signal peptide occupies residues Met-1–Pro-25. Positions Met-1–Gly-857 are necessary for interaction with AP2M1, self-assembly and formation of the irregular, mosaic-like adhesion pattern. The Extracellular segment spans residues Leu-26–Gly-857. In terms of domain architecture, EMI spans Asp-30 to Pro-107. 48 cysteine pairs are disulfide-bonded: Cys-34–Cys-95, Cys-60–Cys-69, Cys-94–Cys-105, Cys-109–Cys-118, Cys-113–Cys-124, Cys-126–Cys-135, Cys-148–Cys-160, Cys-154–Cys-167, Cys-169–Cys-178, Cys-191–Cys-203, Cys-197–Cys-210, Cys-212–Cys-221, Cys-234–Cys-246, Cys-240–Cys-253, Cys-255–Cys-264, Cys-281–Cys-289, Cys-283–Cys-296, Cys-298–Cys-307, Cys-320–Cys-332, Cys-326–Cys-339, Cys-341–Cys-350, Cys-409–Cys-421, Cys-415–Cys-428, Cys-430–Cys-439, Cys-456–Cys-464, Cys-458–Cys-471, Cys-473–Cys-482, Cys-495–Cys-507, Cys-501–Cys-514, Cys-516–Cys-525, Cys-542–Cys-550, Cys-544–Cys-557, Cys-559–Cys-568, Cys-581–Cys-593, Cys-587–Cys-600, Cys-602–Cys-611, Cys-669–Cys-681, Cys-675–Cys-688, Cys-690–Cys-699, Cys-716–Cys-724, Cys-718–Cys-731, Cys-733–Cys-742, Cys-755–Cys-767, Cys-761–Cys-774, Cys-776–Cys-785, Cys-802–Cys-810, Cys-804–Cys-817, and Cys-819–Cys-828. EGF-like domains are found at residues Val-106–Ser-136, Trp-144–Glu-179, Tyr-187–Glu-222, His-230–Gly-265, Ser-278–Gln-308, Tyr-316–Glu-351, Tyr-405–Ser-440, Ser-453–Ser-483, Trp-491–Glu-526, Ala-539–Asp-569, Trp-577–Gln-612, Phe-665–Ser-700, Ile-713–Thr-743, Tyr-751–Glu-786, and Arg-799–Asp-829. The N-linked (GlcNAc...) asparagine glycan is linked to Asn-134. Asn-496 is a glycosylation site (N-linked (GlcNAc...) asparagine). The chain crosses the membrane as a helical span at residues Ala-858–Ile-878. Over Tyr-879–Glu-1140 the chain is Cytoplasmic. Positions Arg-945–Glu-1140 are necessary for formation of large intracellular vacuoles. Phosphotyrosine; by SRC is present on Tyr-1030. The tract at residues Tyr-1111–Glu-1140 is disordered. Residues Ser-1128–Glu-1140 are compositionally biased toward low complexity.

This sequence belongs to the MEGF family. As to quaternary structure, homomer. Interacts with GULP1 and ABCA1. Interacts with AP2M1. Does not interact with MEGF11. Binds with high affinity to complement C1q. Interacts (via the cytoplasmic domain) with NOTCH1 (via NICD domain). In terms of processing, phosphorylated on tyrosine residues. Phosphorylation at Tyr-1030 may be important for muscle cell proliferation. Ubiquitinated; mono- and polyubiquitinated forms are detected. In terms of tissue distribution, expressed in muscle (at protein level).

The protein resides in the cell membrane. Its subcellular location is the cell projection. It is found in the phagocytic cup. Its function is as follows. Membrane receptor involved in phagocytosis by macrophages and astrocytes of apoptotic cells. Receptor for C1q, an eat-me signal, that binds phosphatidylserine expressed on the surface of apoptotic cells. Cooperates with ABCA1 within the process of engulfment. Promotes the formation of large intracellular vacuoles and may be responsible for the uptake of amyloid-beta peptides. Necessary for astrocyte-dependent apoptotic neuron clearance in the developing cerebellum. Plays role in muscle cell proliferation, adhesion and motility. Is also an essential factor in the regulation of myogenesis. Controls the balance between skeletal muscle satellite cells proliferation and differentiation through regulation of the notch signaling pathway. May also function in the mosaic spacing of specific neuron subtypes in the retina through homotypic retinal neuron repulsion. Mosaics provide a mechanism to distribute each cell type evenly across the retina, ensuring that all parts of the visual field have access to a full set of processing elements. This Homo sapiens (Human) protein is Multiple epidermal growth factor-like domains protein 10.